The sequence spans 268 residues: Xyloglucan endotransglucosylase protein 7 (268 aa).

Residues 1–196 (MNAEGGNLHR…WTKAPFTASY (196 aa)) enclose the GH16 domain. Glu82 (nucleophile) is an active-site residue. The active-site Proton donor is the Glu86. Residue Glu86 coordinates xyloglucan. Asn90 is a glycosylation site (N-linked (GlcNAc...) asparagine). Xyloglucan contacts are provided by residues 99-101 (HTN), 109-111 (NRE), 175-176 (DW), and Gly180. 2 disulfide bridges follow: Cys204–Cys213 and Cys251–Cys265. Arg256 lines the xyloglucan pocket.

It belongs to the glycosyl hydrolase 16 family. XTH group 2 subfamily. Post-translationally, contains at least one intrachain disulfide bond essential for its enzymatic activity. In terms of tissue distribution, expressed at a very high level in flowers and stems (picked at anthesis), and at a lower level in ripe leaves and fruits.

It localises to the cytoplasm. The catalysed reaction is breaks a beta-(1-&gt;4) bond in the backbone of a xyloglucan and transfers the xyloglucanyl segment on to O-4 of the non-reducing terminal glucose residue of an acceptor, which can be a xyloglucan or an oligosaccharide of xyloglucan.. Catalyzes xyloglucan endotransglycosylation (XET). Cleaves and religates xyloglucan polymers. Does not catalyze xyloglucan endohydrolysis (XEH). Probably involved in cell wall assembly and synthesis in fast growing tissues and in the maintenance of firmness in mature fruits. The polypeptide is Xyloglucan endotransglucosylase protein 7 (Diospyros kaki (Kaki persimmon)).